We begin with the raw amino-acid sequence, 432 residues long: MQLLTIGINHHTAPVALRERVAFPLEQIKPALSTFKSVFLGHPAPNAPEAAILSTCNRTELYCATNDRAARDAAIRWMSDYHRIPADELAPHVYALPQSEAVRHAFRVASGLDSMVLGETQILGQMKNAVRTASEAGSLGTYLNQLFQRTFAVAKEVRGTTEIGAQSVSMAAAAVRLAQRIFEQVAQQRVLFIGAGEMIELCATHFAAQGPRELVVANRTAERGAKLAERFGGRAMPLADLPARMHEFDIIVSCTASTLPIIGLGAVERAVKARRHRPIFMVDLAVPRDIEPEVGKLKDVFLYTVDDLGAIVREGNASRQAAVAQAEAIIETRVQNFMQWLDARSIVPVIRHMHTQADALRRAEVERARKMLARGDDPDAVLDALSQALTNKLIHGPTSALNRANGADRDSLIDLMRGFYQHAPRSSDTSDR.

Residues 55–58 (TCNR), Ser-114, 119–121 (ETQ), and Gln-125 each bind substrate. Cys-56 serves as the catalytic Nucleophile. 194 to 199 (GAGEMI) is a binding site for NADP(+).

It belongs to the glutamyl-tRNA reductase family. In terms of assembly, homodimer.

The catalysed reaction is (S)-4-amino-5-oxopentanoate + tRNA(Glu) + NADP(+) = L-glutamyl-tRNA(Glu) + NADPH + H(+). It functions in the pathway porphyrin-containing compound metabolism; protoporphyrin-IX biosynthesis; 5-aminolevulinate from L-glutamyl-tRNA(Glu): step 1/2. Catalyzes the NADPH-dependent reduction of glutamyl-tRNA(Glu) to glutamate 1-semialdehyde (GSA). The sequence is that of Glutamyl-tRNA reductase from Burkholderia pseudomallei (strain 1710b).